The primary structure comprises 266 residues: Beta-lactamase OXA-19 (266 aa).

The N-terminal stretch at 1-20 (MKTFAAYVITACLSSTALAS) is a signal peptide. Catalysis depends on serine 67, which acts as the Acyl-ester intermediate. The residue at position 70 (lysine 70) is an N6-carboxylysine. 205–207 (KTG) lines the substrate pocket.

This sequence belongs to the class-D beta-lactamase family.

It catalyses the reaction a beta-lactam + H2O = a substituted beta-amino acid. The polypeptide is Beta-lactamase OXA-19 (bla) (Pseudomonas aeruginosa).